A 159-amino-acid polypeptide reads, in one-letter code: ATP synthase subunit b 2 (159 aa).

Residues 1–21 form a helical membrane-spanning segment; the sequence is MDATFWALVALIIFVGILLYM.

It belongs to the ATPase B chain family. As to quaternary structure, F-type ATPases have 2 components, F(1) - the catalytic core - and F(0) - the membrane proton channel. F(1) has five subunits: alpha(3), beta(3), gamma(1), delta(1), epsilon(1). F(0) has three main subunits: a(1), b(2) and c(10-14). The alpha and beta chains form an alternating ring which encloses part of the gamma chain. F(1) is attached to F(0) by a central stalk formed by the gamma and epsilon chains, while a peripheral stalk is formed by the delta and b chains.

It localises to the cell inner membrane. F(1)F(0) ATP synthase produces ATP from ADP in the presence of a proton or sodium gradient. F-type ATPases consist of two structural domains, F(1) containing the extramembraneous catalytic core and F(0) containing the membrane proton channel, linked together by a central stalk and a peripheral stalk. During catalysis, ATP synthesis in the catalytic domain of F(1) is coupled via a rotary mechanism of the central stalk subunits to proton translocation. Functionally, component of the F(0) channel, it forms part of the peripheral stalk, linking F(1) to F(0). This Chelativorans sp. (strain BNC1) protein is ATP synthase subunit b 2.